The primary structure comprises 267 residues: Octanoyltransferase (267 aa).

Residues 1-30 (MPTGKLRQKPPYAAIMTNSPVTPSTETQQP) form a disordered region. Over residues 16–28 (MTNSPVTPSTETQ) the composition is skewed to polar residues. One can recognise a BPL/LPL catalytic domain in the interval 77 to 265 (GTASELVWLV…AFESVFGPRQ (189 aa)). Substrate is bound by residues 116-123 (RGGEYTYH), 196-198 (AIG), and 209-211 (GIA). Cys227 acts as the Acyl-thioester intermediate in catalysis.

The protein belongs to the LipB family.

The protein localises to the cytoplasm. The catalysed reaction is octanoyl-[ACP] + L-lysyl-[protein] = N(6)-octanoyl-L-lysyl-[protein] + holo-[ACP] + H(+). It functions in the pathway protein modification; protein lipoylation via endogenous pathway; protein N(6)-(lipoyl)lysine from octanoyl-[acyl-carrier-protein]: step 1/2. Catalyzes the transfer of endogenously produced octanoic acid from octanoyl-acyl-carrier-protein onto the lipoyl domains of lipoate-dependent enzymes. Lipoyl-ACP can also act as a substrate although octanoyl-ACP is likely to be the physiological substrate. The protein is Octanoyltransferase of Brucella abortus biovar 1 (strain 9-941).